A 228-amino-acid polypeptide reads, in one-letter code: 5'-methylthioadenosine/S-adenosylhomocysteine nucleosidase (228 aa).

Glu-11 functions as the Proton acceptor in the catalytic mechanism. Residues Gly-77, Ile-151, and 172-173 contribute to the substrate site; that span reads ME. Asp-196 serves as the catalytic Proton donor.

Belongs to the PNP/UDP phosphorylase family. MtnN subfamily.

It catalyses the reaction S-adenosyl-L-homocysteine + H2O = S-(5-deoxy-D-ribos-5-yl)-L-homocysteine + adenine. It carries out the reaction S-methyl-5'-thioadenosine + H2O = 5-(methylsulfanyl)-D-ribose + adenine. The enzyme catalyses 5'-deoxyadenosine + H2O = 5-deoxy-D-ribose + adenine. The protein operates within amino-acid biosynthesis; L-methionine biosynthesis via salvage pathway; S-methyl-5-thio-alpha-D-ribose 1-phosphate from S-methyl-5'-thioadenosine (hydrolase route): step 1/2. Catalyzes the irreversible cleavage of the glycosidic bond in both 5'-methylthioadenosine (MTA) and S-adenosylhomocysteine (SAH/AdoHcy) to adenine and the corresponding thioribose, 5'-methylthioribose and S-ribosylhomocysteine, respectively. Also cleaves 5'-deoxyadenosine, a toxic by-product of radical S-adenosylmethionine (SAM) enzymes, into 5-deoxyribose and adenine. This is 5'-methylthioadenosine/S-adenosylhomocysteine nucleosidase from Staphylococcus saprophyticus subsp. saprophyticus (strain ATCC 15305 / DSM 20229 / NCIMB 8711 / NCTC 7292 / S-41).